A 517-amino-acid polypeptide reads, in one-letter code: Peptide chain release factor 3 (517 aa).

Residues 9-269 (AKRRTFAIIS…DFVEHAPAPR (261 aa)) form the tr-type G domain. GTP is bound by residues 18 to 25 (SHPDAGKT), 86 to 90 (DTPGH), and 140 to 143 (NKLD).

It belongs to the TRAFAC class translation factor GTPase superfamily. Classic translation factor GTPase family. PrfC subfamily.

It localises to the cytoplasm. Functionally, increases the formation of ribosomal termination complexes and stimulates activities of RF-1 and RF-2. It binds guanine nucleotides and has strong preference for UGA stop codons. It may interact directly with the ribosome. The stimulation of RF-1 and RF-2 is significantly reduced by GTP and GDP, but not by GMP. The polypeptide is Peptide chain release factor 3 (Halorhodospira halophila (strain DSM 244 / SL1) (Ectothiorhodospira halophila (strain DSM 244 / SL1))).